Reading from the N-terminus, the 383-residue chain is uncharacterized protein (383 aa).

The protein belongs to the peptidase M20 family.

This is an uncharacterized protein from Staphylococcus epidermidis (strain ATCC 12228 / FDA PCI 1200).